We begin with the raw amino-acid sequence, 229 residues long: Synaptogyrin-3 (229 aa).

Met-1 carries the post-translational modification N-acetylmethionine. Positions 20 to 172 constitute an MARVEL domain; the sequence is FARRPQTLLR…LTVKALQRFR (153 aa). Helical transmembrane passes span 30–50, 70–90, 105–125, and 148–168; these read VASW…GYVN, FGVA…LLDV, VLLD…GFCF, and AVIT…VKAL.

It belongs to the synaptogyrin family. Interacts (via N-terminus) with SLC6A3 (via N-terminus). May interact with VMAT2.

It is found in the cytoplasmic vesicle. The protein localises to the secretory vesicle. It localises to the synaptic vesicle membrane. Its subcellular location is the synapse. May play a role in regulated exocytosis. May indirectly regulate the activity of the plasma membrane dopamine transporter SLC6A3 and thereby regulate dopamine transport back from the synaptic cleft into the presynaptic terminal. In Bos taurus (Bovine), this protein is Synaptogyrin-3.